Reading from the N-terminus, the 1475-residue chain is Sterol 3-beta-glucosyltransferase (1475 aa).

Disordered regions lie at residues M1 to F73 and H94 to K218. Over residues L8–A17 the composition is skewed to low complexity. The segment covering R30–H40 has biased composition (basic residues). A compositionally biased stretch (basic and acidic residues) spans G108–H118. Positions E156–L168 are enriched in basic residues. Residues Q270–K315 form the GRAM 1 domain. One can recognise a PH domain in the interval E318–F413. Disordered stretches follow at residues A492–K541, S594–P636, and Q653–P715. The segment covering Q505–A531 has biased composition (low complexity). Composition is skewed to polar residues over residues Q621–E634 and Q653–R674. The segment covering T675–R686 has biased composition (basic and acidic residues). One can recognise a GRAM 2 domain in the interval R798–Q901. UDP-alpha-D-glucose-binding residues include S989, R990, D992, A1293, H1295, H1308, S1311, G1312, T1313, D1332, and Q1333. The interval I1413–A1475 is disordered. Positions E1416 to E1425 are enriched in acidic residues.

The protein belongs to the glycosyltransferase 28 family.

Its subcellular location is the cytoplasm. The protein resides in the preautophagosomal structure membrane. It catalyses the reaction a sterol + UDP-alpha-D-glucose = a sterol 3-beta-D-glucoside + UDP + H(+). The catalysed reaction is ergosterol + UDP-alpha-D-glucose = ergosteryl 3-beta-D-glucoside + UDP + H(+). Sterol glycosyltransferase responsible for the glycosylation of ergosterol to form ergosterol-glucoside. Mediates autophagic degradation of peroxisomes (pexophagy) and is involved in pathogenesis via peroxisome degradation inside appressoria that are developing into the host invasion stage. The polypeptide is Sterol 3-beta-glucosyltransferase (Glomerella lagenarium (Anthracnose fungus)).